The sequence spans 911 residues: Viral IRF4-like protein (911 aa).

A DNA-binding region (IRF tryptophan pentad repeat) is located at residues 7 to 114 (SEWATLWIID…GSYVVWQLVR (108 aa)). Disordered regions lie at residues 147 to 184 (TTAT…PRKS), 211 to 302 (ASTS…SRLP), 494 to 537 (GGAP…PYVC), and 681 to 727 (ELQE…FFDP). Positions 211–221 (ASTSGMGSSGT) are enriched in low complexity. Composition is skewed to polar residues over residues 222 to 231 (RQVTQASSFT) and 495 to 505 (GAPNQGLSHTQ). Over residues 697-710 (RRPRSRSPHGRRTP) the composition is skewed to basic residues.

The protein belongs to the IRF family. In terms of assembly, interacts with host MDM2; this interaction facilitates the proteasomal degradation of TP53/p53. Interacts with host IRF7; this interaction prevents IRF7 dimerization and subsequent activation.

It is found in the host nucleus. In terms of biological role, plays a role in host cell apoptosis modulation by promoting TP53/p53 ubiquitination and subsequent degradation and thus down-regulating TP53/p53-mediated apoptosis. Works as a potential viral transcription factor to modulate host gene expression to build favorable environments for the viral lytic life cycle and greatly accelerates the induction of an immediate early gene RTA, early genes ORF36 and ORF57, late genes ORF25 and ORF64, and latent genes LANA1 and v-IRF3. Inhibits host interferon-alpha production by interacting with host IRF7 and preventing IRF7 dimerization. In Homo sapiens (Human), this protein is Viral IRF4-like protein (vIRF-4).